The primary structure comprises 20 residues: GMP synthase [glutamine-hydrolyzing] (20 aa).

In terms of domain architecture, GMPS ATP-PPase spans 1–20 (ALGDQLLSVFVDHTLVDEVA).

In terms of assembly, homodimer.

It carries out the reaction XMP + L-glutamine + ATP + H2O = GMP + L-glutamate + AMP + diphosphate + 2 H(+). Its pathway is purine metabolism; GMP biosynthesis; GMP from XMP (L-Gln route): step 1/1. Catalyzes the synthesis of GMP from XMP. The protein is GMP synthase [glutamine-hydrolyzing] (guaA) of Fructilactobacillus sanfranciscensis (Lactobacillus sanfranciscensis).